The primary structure comprises 233 residues: Large ribosomal subunit protein uL1 (233 aa).

This sequence belongs to the universal ribosomal protein uL1 family. Part of the 50S ribosomal subunit.

Functionally, binds directly to 23S rRNA. The L1 stalk is quite mobile in the ribosome, and is involved in E site tRNA release. Its function is as follows. Protein L1 is also a translational repressor protein, it controls the translation of the L11 operon by binding to its mRNA. The chain is Large ribosomal subunit protein uL1 from Geotalea daltonii (strain DSM 22248 / JCM 15807 / FRC-32) (Geobacter daltonii).